The chain runs to 195 residues: Probable GTP-binding protein EngB (195 aa).

Residues 24-195 (DIPEIALAGR…AAWDAILSKI (172 aa)) form the EngB-type G domain. Residues 32 to 39 (GRSNVGKS), 59 to 63 (GKTQL), 77 to 80 (DVPG), 144 to 147 (TKAD), and 176 to 178 (FSS) each bind GTP. Residues Ser39 and Thr61 each coordinate Mg(2+).

Belongs to the TRAFAC class TrmE-Era-EngA-EngB-Septin-like GTPase superfamily. EngB GTPase family. Mg(2+) is required as a cofactor.

Its function is as follows. Necessary for normal cell division and for the maintenance of normal septation. The chain is Probable GTP-binding protein EngB from Streptococcus sanguinis (strain SK36).